The sequence spans 165 residues: Crossover junction endodeoxyribonuclease RuvC (165 aa).

Active-site residues include aspartate 7, glutamate 66, and aspartate 138. 3 residues coordinate Mg(2+): aspartate 7, glutamate 66, and aspartate 138.

It belongs to the RuvC family. Homodimer which binds Holliday junction (HJ) DNA. The HJ becomes 2-fold symmetrical on binding to RuvC with unstacked arms; it has a different conformation from HJ DNA in complex with RuvA. In the full resolvosome a probable DNA-RuvA(4)-RuvB(12)-RuvC(2) complex forms which resolves the HJ. It depends on Mg(2+) as a cofactor.

Its subcellular location is the cytoplasm. It carries out the reaction Endonucleolytic cleavage at a junction such as a reciprocal single-stranded crossover between two homologous DNA duplexes (Holliday junction).. Functionally, the RuvA-RuvB-RuvC complex processes Holliday junction (HJ) DNA during genetic recombination and DNA repair. Endonuclease that resolves HJ intermediates. Cleaves cruciform DNA by making single-stranded nicks across the HJ at symmetrical positions within the homologous arms, yielding a 5'-phosphate and a 3'-hydroxyl group; requires a central core of homology in the junction. The consensus cleavage sequence is 5'-(A/T)TT(C/G)-3'. Cleavage occurs on the 3'-side of the TT dinucleotide at the point of strand exchange. HJ branch migration catalyzed by RuvA-RuvB allows RuvC to scan DNA until it finds its consensus sequence, where it cleaves and resolves the cruciform DNA. The protein is Crossover junction endodeoxyribonuclease RuvC of Ruegeria pomeroyi (strain ATCC 700808 / DSM 15171 / DSS-3) (Silicibacter pomeroyi).